The sequence spans 555 residues: Beta-hexosaminidase A (555 aa).

The signal sequence occupies residues 1-18; that stretch reads MRLLIPILIFALITTAVT. Residue Asn47 is glycosylated (N-linked (GlcNAc...) asparagine). Glu325 (proton donor) is an active-site residue. 3 N-linked (GlcNAc...) asparagine glycosylation sites follow: Asn351, Asn412, and Asn460.

Belongs to the glycosyl hydrolase 20 family. In terms of tissue distribution, expressed in coelomocytes and neurons of the pharyngeal region and nerve cord.

Its subcellular location is the lysosome. It carries out the reaction Hydrolysis of terminal non-reducing N-acetyl-D-hexosamine residues in N-acetyl-beta-D-hexosaminides.. Functionally, responsible for the degradation of GM2 gangliosides, and a variety of other molecules containing terminal N-acetyl hexosamines. Degrades chitotriose. This chain is Beta-hexosaminidase A (hex-1), found in Caenorhabditis elegans.